The primary structure comprises 567 residues: Proline--tRNA ligase (567 aa).

Belongs to the class-II aminoacyl-tRNA synthetase family. ProS type 1 subfamily. Homodimer.

It localises to the cytoplasm. It catalyses the reaction tRNA(Pro) + L-proline + ATP = L-prolyl-tRNA(Pro) + AMP + diphosphate. In terms of biological role, catalyzes the attachment of proline to tRNA(Pro) in a two-step reaction: proline is first activated by ATP to form Pro-AMP and then transferred to the acceptor end of tRNA(Pro). As ProRS can inadvertently accommodate and process non-cognate amino acids such as alanine and cysteine, to avoid such errors it has two additional distinct editing activities against alanine. One activity is designated as 'pretransfer' editing and involves the tRNA(Pro)-independent hydrolysis of activated Ala-AMP. The other activity is designated 'posttransfer' editing and involves deacylation of mischarged Ala-tRNA(Pro). The misacylated Cys-tRNA(Pro) is not edited by ProRS. The protein is Proline--tRNA ligase of Streptomyces coelicolor (strain ATCC BAA-471 / A3(2) / M145).